The chain runs to 138 residues: ATP synthase epsilon chain (138 aa).

This sequence belongs to the ATPase epsilon chain family. In terms of assembly, F-type ATPases have 2 components, CF(1) - the catalytic core - and CF(0) - the membrane proton channel. CF(1) has five subunits: alpha(3), beta(3), gamma(1), delta(1), epsilon(1). CF(0) has three main subunits: a, b and c.

The protein resides in the cell inner membrane. Its function is as follows. Produces ATP from ADP in the presence of a proton gradient across the membrane. The protein is ATP synthase epsilon chain of Psychrobacter sp. (strain PRwf-1).